The chain runs to 126 residues: S-adenosylmethionine decarboxylase proenzyme (126 aa).

The Schiff-base intermediate with substrate; via pyruvic acid role is filled by serine 63. At serine 63 the chain carries Pyruvic acid (Ser); by autocatalysis. Histidine 68 (proton acceptor; for processing activity) is an active-site residue. Cysteine 83 (proton donor; for catalytic activity) is an active-site residue.

Belongs to the prokaryotic AdoMetDC family. Type 1 subfamily. As to quaternary structure, heterotetramer of two alpha and two beta chains arranged as a dimer of alpha/beta heterodimers. Requires pyruvate as cofactor. Is synthesized initially as an inactive proenzyme. Formation of the active enzyme involves a self-maturation process in which the active site pyruvoyl group is generated from an internal serine residue via an autocatalytic post-translational modification. Two non-identical subunits are generated from the proenzyme in this reaction, and the pyruvate is formed at the N-terminus of the alpha chain, which is derived from the carboxyl end of the proenzyme. The post-translation cleavage follows an unusual pathway, termed non-hydrolytic serinolysis, in which the side chain hydroxyl group of the serine supplies its oxygen atom to form the C-terminus of the beta chain, while the remainder of the serine residue undergoes an oxidative deamination to produce ammonia and the pyruvoyl group blocking the N-terminus of the alpha chain.

The enzyme catalyses S-adenosyl-L-methionine + H(+) = S-adenosyl 3-(methylsulfanyl)propylamine + CO2. Its pathway is amine and polyamine biosynthesis; S-adenosylmethioninamine biosynthesis; S-adenosylmethioninamine from S-adenosyl-L-methionine: step 1/1. Its function is as follows. Catalyzes the decarboxylation of S-adenosylmethionine to S-adenosylmethioninamine (dcAdoMet), the propylamine donor required for the synthesis of the polyamines spermine and spermidine from the diamine putrescine. The sequence is that of S-adenosylmethionine decarboxylase proenzyme from Pelotomaculum thermopropionicum (strain DSM 13744 / JCM 10971 / SI).